Reading from the N-terminus, the 33-residue chain is Alpha-amanitin proprotein (33 aa).

Positions 1-10 are excised as a propeptide; that stretch reads MSDINATRLP. I11 carries the post-translational modification (3R,4R)-4,5-dihydroxyisoleucine; in form alpha-amanitin. Position 11 is a (3R,4S)-4-hydroxyisoleucine; in form gamma-amanitin (I11). The cyclopeptide (Ile-Pro) cross-link spans 11–18; the sequence is IWGIGCNP. A cross-link (2'-cysteinyl-6'-hydroxytryptophan sulfoxide (Trp-Cys)) is located at residues 12–16; sequence WGIGC. The residue at position 18 (P18) is a 4-hydroxyproline. Residues 19–33 constitute a propeptide that is removed on maturation; it reads SVGDEVTALLTSGEA.

The protein belongs to the MSDIN fungal toxin family. Post-translationally, processed by the macrocyclase-peptidase enzyme POPB to yield a toxic cyclic decapeptide. POPB first removes 10 residues from the N-terminus. Conformational trapping of the remaining peptide forces the enzyme to release this intermediate rather than proceed to macrocyclization. The enzyme rebinds the remaining peptide in a different conformation and catalyzes macrocyclization of the N-terminal 8 residues.

Major toxin belonging to the bicyclic octapeptides amatoxins that acts by binding non-competitively to RNA polymerase II and greatly slowing the elongation of transcripts from target promoters. The polypeptide is Alpha-amanitin proprotein (Amanita fuliginea (East Asian brown death cap)).